The primary structure comprises 1284 residues: A-type inclusion protein A25 homolog (1284 aa).

The tract at residues 340–383 (KPITNTGIEEPHATGGDKEEQEQQPVKVVQSKPDDGITPYNPFE) is disordered. Residues 348-357 (EEPHATGGDK) show a composition bias toward basic and acidic residues. 10 consecutive repeat copies span residues 611–637 (VRRE…RNQE), 638–665 (DTQE…SGGG), 666–689 (NLTE…ECRG), 690–720 (NATE…NNAD), 721–751 (TERE…SNAD), 752–780 (MERE…GNGT), 781–811 (SSEE…ELYS), 812–842 (AYKS…KTDS), 843–871 (YYRR…TNHA), and 872–912 (KYID…REIE). Residues 611-912 (VRRELEEERR…DMDQYKREIE (302 aa)) form a 10 X approximate tandem repeats region. The interval 1169–1234 (PLTTEDTEPK…PPKPETPQIS (66 aa)) is disordered. The segment covering 1180–1192 (VEVVPPSSDVTEP) has biased composition (low complexity). Over residues 1211 to 1221 (SEYQTSVSQVA) the composition is skewed to polar residues.

This sequence belongs to the poxviridae A25 protein family. Interacts (via N-terminus) with protein A26.

It localises to the virion. In terms of biological role, structural protein that forms a matrix surrounding the mature virion (MV) through interaction with protein A26. Presence of protein A25 in the virion structurally prevents direct virus-cell fusion mechanism. The chain is A-type inclusion protein A25 homolog (ATI) from Apodemus sylvaticus (European woodmouse).